Here is a 304-residue protein sequence, read N- to C-terminus: Aspartate carbamoyltransferase catalytic subunit (304 aa).

Residues Arg49 and Thr50 each coordinate carbamoyl phosphate. Lys77 provides a ligand contact to L-aspartate. Positions 99, 127, and 130 each coordinate carbamoyl phosphate. The L-aspartate site is built by Arg160 and Arg211. Residues Ala252 and Pro253 each contribute to the carbamoyl phosphate site.

It belongs to the aspartate/ornithine carbamoyltransferase superfamily. ATCase family. Heterododecamer (2C3:3R2) of six catalytic PyrB chains organized as two trimers (C3), and six regulatory PyrI chains organized as three dimers (R2).

It catalyses the reaction carbamoyl phosphate + L-aspartate = N-carbamoyl-L-aspartate + phosphate + H(+). It functions in the pathway pyrimidine metabolism; UMP biosynthesis via de novo pathway; (S)-dihydroorotate from bicarbonate: step 2/3. In terms of biological role, catalyzes the condensation of carbamoyl phosphate and aspartate to form carbamoyl aspartate and inorganic phosphate, the committed step in the de novo pyrimidine nucleotide biosynthesis pathway. This chain is Aspartate carbamoyltransferase catalytic subunit, found in Bacillus cereus (strain ATCC 10987 / NRS 248).